Reading from the N-terminus, the 244-residue chain is Orotidine 5'-phosphate decarboxylase (244 aa).

Residues D12, K34, 61–70 (DLKLFDIPNT), T125, R187, Q196, G216, and R217 contribute to the substrate site. The Proton donor role is filled by K63.

Belongs to the OMP decarboxylase family. Type 1 subfamily. As to quaternary structure, homodimer.

The catalysed reaction is orotidine 5'-phosphate + H(+) = UMP + CO2. Its pathway is pyrimidine metabolism; UMP biosynthesis via de novo pathway; UMP from orotate: step 2/2. Catalyzes the decarboxylation of orotidine 5'-monophosphate (OMP) to uridine 5'-monophosphate (UMP). This is Orotidine 5'-phosphate decarboxylase from Dictyoglomus thermophilum (strain ATCC 35947 / DSM 3960 / H-6-12).